The primary structure comprises 529 residues: MDLFPILVVVLMTDTVLGKFQIVFPDQNELEWRPVVGDSRHCPQSSEMQFDGSRSQTILTGKAPVGITPSKSDGFICHAAKWVTTCDFRWYGPKYITHSIHHLRPTTSDCETALQRYKDGSLINLGFPPESCGYATVTDSEAMLVQVTPHHVGVDDYRGHWIDPLFPGGECSTNFCDTVHNSSVWIPKSQKTDICAQSFKNIKMTASYPSEGALVSDRFAFHSAYHPNMPGSTVCIMDFCEQKGLRFTNGEWMGLNVEQSIREKKISAIFPNCVAGTEIRATLESEGARTLTWETQRMLDYSLCQNTWDKVSRKEPLSPLDLSYLSPRAPGKGMAYTVINGTLHSAHAKYIRTWIDYGEMKEIKGGRGEYSKAPELLWSQWFDFGPFKIGPNGLLHTGKTFKFPLYLIGAGIIDEDLHELDEAAPIDHPQMPDAKSVLPEDEEIFFGDTGVSKNPIELIQGWFSNWRESVMAIVGIVLLIVVTFLAIKTVRVLNCLWRPRKKRIVRQEVDVESRLNHFEMRGFPEYVKR.

The signal sequence occupies residues 1–18 (MDLFPILVVVLMTDTVLG). At 19 to 469 (KFQIVFPDQN…QGWFSNWRES (451 aa)) the chain is on the virion surface side. 6 disulfide bridges follow: C42/C304, C77/C110, C86/C132, C171/C176, C195/C240, and C235/C273. Residues 55–174 (SQTILTGKAP…LFPGGECSTN (120 aa)) are fusion peptide. N181 carries an N-linked (GlcNAc...) asparagine; by host glycan. Residues 259-313 (QSIREKKISAIFPNCVAGTEIRATLESEGARTLTWETQRMLDYSLCQNTWDKVSR) are trimerization. The N-linked (GlcNAc...) asparagine; by host glycan is linked to N340. The tract at residues 388 to 410 (KIGPNGLLHTGKTFKFPLYLIGA) is trimerization. Residues 470 to 490 (VMAIVGIVLLIVVTFLAIKTV) traverse the membrane as a helical segment. Residues 491 to 529 (RVLNCLWRPRKKRIVRQEVDVESRLNHFEMRGFPEYVKR) lie on the Intravirion side of the membrane.

This sequence belongs to the vesiculovirus glycoprotein family. As to quaternary structure, homotrimer. Interacts with host LDL at target cell surface. Post-translationally, glycosylated by host. Palmitoylated by host.

It is found in the virion membrane. The protein localises to the host membrane. Functionally, attaches the virus to host receptors, inducing clathrin-dependent endocytosis of the virion. In the endosome, the acidic pH induces conformational changes in the glycoprotein trimer, which trigger fusion between virus and endosomal membrane. The polypeptide is Glycoprotein (G) (Gracilinanus microtarsus (Brazilian gracile mouse opossum)).